We begin with the raw amino-acid sequence, 394 residues long: Phosphoglycerate kinase (394 aa).

Substrate is bound by residues 21-23 (DFN), Arg-36, 59-62 (HLGR), Arg-118, and Arg-151. A Phosphoserine modification is found at Ser-183. Residue Lys-201 coordinates ATP. The residue at position 299 (Thr-299) is a Phosphothreonine. Residues Glu-323 and 350–353 (GGDS) each bind ATP.

This sequence belongs to the phosphoglycerate kinase family. In terms of assembly, monomer.

Its subcellular location is the cytoplasm. The enzyme catalyses (2R)-3-phosphoglycerate + ATP = (2R)-3-phospho-glyceroyl phosphate + ADP. It participates in carbohydrate degradation; glycolysis; pyruvate from D-glyceraldehyde 3-phosphate: step 2/5. The polypeptide is Phosphoglycerate kinase (Geobacillus kaustophilus (strain HTA426)).